The primary structure comprises 236 residues: Ubiquinone biosynthesis O-methyltransferase (236 aa).

Residues Arg-39, Gly-59, Asp-80, and Met-124 each coordinate S-adenosyl-L-methionine.

This sequence belongs to the methyltransferase superfamily. UbiG/COQ3 family.

It carries out the reaction a 3-demethylubiquinol + S-adenosyl-L-methionine = a ubiquinol + S-adenosyl-L-homocysteine + H(+). The enzyme catalyses a 3-(all-trans-polyprenyl)benzene-1,2-diol + S-adenosyl-L-methionine = a 2-methoxy-6-(all-trans-polyprenyl)phenol + S-adenosyl-L-homocysteine + H(+). It participates in cofactor biosynthesis; ubiquinone biosynthesis. O-methyltransferase that catalyzes the 2 O-methylation steps in the ubiquinone biosynthetic pathway. The chain is Ubiquinone biosynthesis O-methyltransferase from Shewanella sp. (strain ANA-3).